The sequence spans 517 residues: Superoxide-generating NADPH oxidase heavy chain subunit A (517 aa).

Topologically, residues 1-19 (MRLPTKEEIQRYWVNEGNK) are cytoplasmic. Residues 20–40 (LILVILYTLGNIAAFVYTFVH) form a helical membrane-spanning segment. Residues 41–62 (YYNSPAFEVVGYGVCFARGCAQ) are Extracellular-facing. Positions 58-201 (RGCAQLLKLN…LFVVFFGLLV (144 aa)) constitute a Ferric oxidoreductase domain. Residues 63-83 (LLKLNCALILVPVLRNLLSFL) form a helical membrane-spanning segment. Residues 84–97 (RGTFLNNYVPFDKN) are Cytoplasmic-facing. A helical membrane pass occupies residues 98–118 (IVFHKLIAWVICFATFGHVMA). Heme contacts are provided by histidine 101 and histidine 115. The Extracellular portion of the chain corresponds to 119–149 (HFNNFRLYQDITPQEYKRILGIDYPNLTPIK). A helical membrane pass occupies residues 150-170 (YAFATLAGWTGHVVCIVMVLM). At 171 to 184 (YTSAVESIRRPMFE) the chain is on the cytoplasmic side. The chain crosses the membrane as a helical span at residues 185-205 (GFWYTHHLFVVFFGLLVVHGL). Histidine 190 and histidine 203 together coordinate heme. Position 206 (histidine 206) is a topological domain, extracellular. A helical membrane pass occupies residues 207-227 (SILEPTSFWKWVIGPCALYIV). The Cytoplasmic segment spans residues 228–517 (ERLIRLLRSK…CRFHYNKENF (290 aa)). The region spanning 229 to 349 (RLIRLLRSKK…DGPFGAASEE (121 aa)) is the FAD-binding FR-type domain. FAD is bound at residue 283–289 (HPFTITS).

As to quaternary structure, composed of a heavy chain and a light chain. FAD is required as a cofactor.

The protein resides in the membrane. Critical component of the membrane-bound oxidase that generates superoxide. It is the terminal component of a respiratory chain that transfers single electrons from cytoplasmic NADPH across the plasma membrane to molecular oxygen on the exterior. In Dictyostelium discoideum (Social amoeba), this protein is Superoxide-generating NADPH oxidase heavy chain subunit A (noxA).